A 289-amino-acid chain; its full sequence is Iodotyrosine deiodinase 1 (289 aa).

A helical membrane pass occupies residues 1-21; the sequence is MFLLTPVLVAVVCILMVWIFK. FMN-binding positions include 100-104 and 128-129; these read RRSVR and SG. 3,5-diiodo-L-tyrosine contacts are provided by Ala130, Glu157, Tyr161, and Lys182. Residues Ala130, Glu157, Tyr161, and Lys182 each contribute to the 3-iodo-L-tyrosine site. Residues 237–239 and Arg279 contribute to the FMN site; that span reads TTT.

The protein belongs to the nitroreductase family. As to quaternary structure, homodimer. FMN is required as a cofactor. As to expression, detected in thyroid (at protein level).

Its subcellular location is the cell membrane. It is found in the cytoplasmic vesicle membrane. The enzyme catalyses 2 iodide + L-tyrosine + 2 NADP(+) = 3,5-diiodo-L-tyrosine + 2 NADPH + H(+). It catalyses the reaction iodide + L-tyrosine + NADP(+) = 3-iodo-L-tyrosine + NADPH. The catalysed reaction is 3-iodo-L-tyrosine + iodide + NADP(+) = 3,5-diiodo-L-tyrosine + NADPH + H(+). It carries out the reaction L-tyrosine + chloride + NADP(+) = 3-chloro-L-tyrosine + NADPH. The enzyme catalyses bromide + L-tyrosine + NADP(+) = 3-bromo-L-tyrosine + NADPH. Functionally, catalyzes the dehalogenation of halotyrosines such as 3-bromo-L-tyrosine, 3-chloro-L-tyrosine, 3-iodo-L-tyrosine and 3,5-diiodo-L-tyrosine. During thyroid hormone biosynthesis, facilitates iodide salvage by catalysing the oxidative NADPH-dependent deiodination of the halogenated by-products of thyroid hormone production, monoiodotyrosine (L-MIT) and diiodotyrosine (L-DIT). The scavanged iodide can then reenter the hormone-producing pathways. Acts more efficiently on 3-iodo-L-tyrosine than 3,5-diiodo-L-tyrosine. This Sus scrofa (Pig) protein is Iodotyrosine deiodinase 1 (IYD).